Here is a 470-residue protein sequence, read N- to C-terminus: GTPase grn1 (470 aa).

Residues 1–16 show a composition bias toward basic residues; it reads MVSLKKKSKRRTTRLR. Residues 1-56 form a disordered region; that stretch reads MVSLKKKSKRRTTRLRSRIEKKAAESKRKQKRADKKNPQWKSRIPKDPGIPNSFPY. Residues 17–27 are compositionally biased toward basic and acidic residues; it reads SRIEKKAAESK. Positions 153–333 constitute a CP-type G domain; that stretch reads DKEFKKVVEA…LVDSPGIVFP (181 aa). GTP contacts are provided by residues 202-205, 276-283, and 326-329; these read NKID, GYPNVGKS, and DSPG. Positions 405 to 415 are RNA-binding; that stretch reads ARKRGRLGRGG.

It belongs to the TRAFAC class YlqF/YawG GTPase family.

It is found in the nucleus. The protein resides in the nucleolus. Its function is as follows. Required for optimal growth. Required for normal processing of ribosomal pre-rRNA. Required for nuclear export of ribosomal protein rpl2501. The sequence is that of GTPase grn1 from Schizosaccharomyces pombe (strain 972 / ATCC 24843) (Fission yeast).